We begin with the raw amino-acid sequence, 281 residues long: RAD52 motif-containing protein 1 (281 aa).

The interval M1–K92 is necessary for nuclear localization and for nucleolar accumulation in response to heat shock. In terms of domain architecture, RRM spans K15 to R98. Residues P90–K133 form a necessary for nuclear and nucleolar localization region.

As to quaternary structure, homodimer.

It is found in the nucleus. The protein resides in the cytoplasm. Its subcellular location is the nucleolus. It localises to the cajal body. The protein localises to the PML body. In terms of biological role, may confer resistance to the antitumor agent cisplatin. Binds to DNA and RNA. This is RAD52 motif-containing protein 1 (Rdm1) from Mus musculus (Mouse).